Reading from the N-terminus, the 1027-residue chain is INO80 complex subunit D (1027 aa).

A Glycyl lysine isopeptide (Lys-Gly) (interchain with G-Cter in SUMO2) cross-link involves residue Lys-87. At Ser-132 the chain carries Phosphoserine. Disordered stretches follow at residues 193–278 (HFSP…VDPP), 519–574 (RGDN…LSMP), 813–850 (RQQY…HTTS), 914–969 (LSTS…TSPK), and 982–1027 (QLSS…PSPN). A compositionally biased stretch (low complexity) spans 201–216 (SQQQPPQQHSHLSPLS). The segment covering 229–257 (VCKSPQPQNTSLPMQGVAPTTHTIAQARQ) has biased composition (polar residues). Positions 525–559 (KVQHQQQRKPRKKTKPPALTKKHKKKRRRGPRRPQ) are enriched in basic residues. Residues 914–932 (LSTSLSTPPTTSNSETTQP) show a composition bias toward low complexity. Residues 937 to 954 (VTPSSSSVLPGLPQTSFS) show a composition bias toward polar residues. Residues 1001 to 1027 (APPTGFTVTGATATSTNNASSPFPSPN) show a composition bias toward low complexity.

It belongs to the INO80D family. As to quaternary structure, component of the chromatin remodeling INO80 complex; specifically part of a complex module associated with the N-terminus of INO80.

The protein localises to the nucleus. In terms of biological role, putative regulatory component of the chromatin remodeling INO80 complex which is involved in transcriptional regulation, DNA replication and probably DNA repair. The protein is INO80 complex subunit D of Homo sapiens (Human).